Consider the following 90-residue polypeptide: NAD(P)H-quinone oxidoreductase subunit H, chloroplastic (90 aa).

Belongs to the complex I 49 kDa subunit family. As to quaternary structure, NDH is composed of at least 16 different subunits, 5 of which are encoded in the nucleus.

The protein localises to the plastid. It is found in the chloroplast thylakoid membrane. It carries out the reaction a plastoquinone + NADH + (n+1) H(+)(in) = a plastoquinol + NAD(+) + n H(+)(out). The catalysed reaction is a plastoquinone + NADPH + (n+1) H(+)(in) = a plastoquinol + NADP(+) + n H(+)(out). NDH shuttles electrons from NAD(P)H:plastoquinone, via FMN and iron-sulfur (Fe-S) centers, to quinones in the photosynthetic chain and possibly in a chloroplast respiratory chain. The immediate electron acceptor for the enzyme in this species is believed to be plastoquinone. Couples the redox reaction to proton translocation, and thus conserves the redox energy in a proton gradient. The sequence is that of NAD(P)H-quinone oxidoreductase subunit H, chloroplastic (ndhH) from Secale cereale (Rye).